Here is a 317-residue protein sequence, read N- to C-terminus: MTTQLDALRNMTVVVADTGDIDAIKKYQPQDATTNPSLILSASSLPQYAPLIDEAIAYAKAKSADKTQQLIDAEDKLAVNIGLEILKIVPGRISTEVDARLSYDTQATVEKARKLIALYNEAGISNDRILIKIASTWQGIRAAEILEKEGINCNLTLLFSEAQARACAEAGVYLISPFVGRILDWYKANSDKKEYAPAEDPGVISVTKIYNYYKQYGYNTVVMGASFRNVGEITELAGCDRLTIAPALLKELQENSTALVRKLEFKGEVQAKPQPLTESQFYWQHNSDPMAVEKLADGIRKFAIDQEKLEKMLLEKF.

Lys-132 (schiff-base intermediate with substrate) is an active-site residue.

The protein belongs to the transaldolase family. Type 1 subfamily. Homodimer.

The protein resides in the cytoplasm. The catalysed reaction is D-sedoheptulose 7-phosphate + D-glyceraldehyde 3-phosphate = D-erythrose 4-phosphate + beta-D-fructose 6-phosphate. The protein operates within carbohydrate degradation; pentose phosphate pathway; D-glyceraldehyde 3-phosphate and beta-D-fructose 6-phosphate from D-ribose 5-phosphate and D-xylulose 5-phosphate (non-oxidative stage): step 2/3. In terms of biological role, transaldolase is important for the balance of metabolites in the pentose-phosphate pathway. This Histophilus somni (strain 129Pt) (Haemophilus somnus) protein is Transaldolase.